Consider the following 98-residue polypeptide: Large ribosomal subunit protein eL21 (98 aa).

The interval 1-23 is disordered; sequence MVDRKGKGFRRKTRDKLSKHPRQ. Residues 7-23 show a composition bias toward basic residues; the sequence is KGFRRKTRDKLSKHPRQ.

The protein belongs to the eukaryotic ribosomal protein eL21 family.

This is Large ribosomal subunit protein eL21 from Nanoarchaeum equitans (strain Kin4-M).